The primary structure comprises 311 residues: 33 kDa chaperonin (311 aa).

2 disulfides stabilise this stretch: C240–C242 and C273–C276.

The protein belongs to the HSP33 family. Under oxidizing conditions two disulfide bonds are formed involving the reactive cysteines. Under reducing conditions zinc is bound to the reactive cysteines and the protein is inactive.

It is found in the cytoplasm. In terms of biological role, redox regulated molecular chaperone. Protects both thermally unfolding and oxidatively damaged proteins from irreversible aggregation. Plays an important role in the bacterial defense system toward oxidative stress. This is 33 kDa chaperonin from Trichodesmium erythraeum (strain IMS101).